Here is a 43-residue protein sequence, read N- to C-terminus: Protein PsbN (43 aa).

The chain crosses the membrane as a helical span at residues 5 to 27; sequence TLVAIFISGSLVSFTGYALYTAF.

Belongs to the PsbN family.

Its subcellular location is the plastid. The protein resides in the chloroplast thylakoid membrane. In terms of biological role, may play a role in photosystem I and II biogenesis. The chain is Protein PsbN from Nelumbo lutea (American lotus).